The sequence spans 172 residues: Large ribosomal subunit protein uL10 (172 aa).

The protein belongs to the universal ribosomal protein uL10 family. As to quaternary structure, part of the ribosomal stalk of the 50S ribosomal subunit. The N-terminus interacts with L11 and the large rRNA to form the base of the stalk. The C-terminus forms an elongated spine to which L12 dimers bind in a sequential fashion forming a multimeric L10(L12)X complex.

Its function is as follows. Forms part of the ribosomal stalk, playing a central role in the interaction of the ribosome with GTP-bound translation factors. The protein is Large ribosomal subunit protein uL10 (rplJ) of Liberibacter africanus subsp. capensis.